We begin with the raw amino-acid sequence, 203 residues long: Urease accessory protein UreG (203 aa).

G14–T21 lines the GTP pocket.

Belongs to the SIMIBI class G3E GTPase family. UreG subfamily. In terms of assembly, homodimer. UreD, UreF and UreG form a complex that acts as a GTP-hydrolysis-dependent molecular chaperone, activating the urease apoprotein by helping to assemble the nickel containing metallocenter of UreC. The UreE protein probably delivers the nickel.

The protein resides in the cytoplasm. Its function is as follows. Facilitates the functional incorporation of the urease nickel metallocenter. This process requires GTP hydrolysis, probably effectuated by UreG. This is Urease accessory protein UreG from Allorhizobium ampelinum (strain ATCC BAA-846 / DSM 112012 / S4) (Agrobacterium vitis (strain S4)).